The following is a 714-amino-acid chain: Palmitoyltransferase ZDHHC5 (714 aa).

Residues 1–13 (MPAESAKRFKPSK) are Cytoplasmic-facing. A helical transmembrane segment spans residues 14 to 34 (YVPVSAAAIFLVGATTLFFAF). At 35-52 (TCPGLSLSVSPAVPVYNA) the chain is on the extracellular side. A helical membrane pass occupies residues 53 to 73 (VVFLFVLANFSMATFMDPGVF). Over 74 to 148 (PRAEEDEDKE…NCIGRRNYRY (75 aa)) the chain is Cytoplasmic. At Y91 the chain carries Phosphotyrosine. The region spanning 104 to 154 (KWCATCRFYRPPRCSHCSVCDNCVEEFDHHCPWVNNCIGRRNYRYFFLFLL) is the DHHC domain. The active-site S-palmitoyl cysteine intermediate is the C134. Residues 149–169 (FFLFLLSLTAHITGVFGFGLL) form a helical membrane-spanning segment. At 170 to 191 (YVLYHMEELSGVRTAVTMAVMC) the chain is on the extracellular side. The chain crosses the membrane as a helical span at residues 192 to 212 (VAGLFFIPVAGLTGFHVVLVA). Over 213-714 (RGRTTNEQVT…VGGTTYEISV (502 aa)) the chain is Cytoplasmic. S247 is subject to Phosphoserine. Residues 289 to 714 (GELRRTKSKG…VGGTTYEISV (426 aa)) are disordered. A Phosphothreonine modification is found at T294. A phosphoserine mark is found at S296 and S299. The residue at position 303 (T303) is a Phosphothreonine. The residue at position 345 (S345) is a Phosphoserine. Phosphothreonine is present on residues T348 and T350. Positions 359–373 (SSSSASAAMPHSSSA) are enriched in low complexity. S380, S398, S406, and S409 each carry phosphoserine. Residues 388-398 (AESSRQPSYRS) are compositionally biased toward polar residues. The residue at position 411 (T411) is a Phosphothreonine. The segment covering 422 to 432 (SSGSRSSSLKS) has biased composition (low complexity). S425, S429, and S432 each carry phosphoserine. T436 bears the Phosphothreonine mark. Residues 445–478 (SIRSEGTTSTSYKSLANQTRNGSLSYDSLLTPSD) show a composition bias toward polar residues. S529 and S554 each carry phosphoserine. The residue at position 616 (R616) is an Omega-N-methylarginine. Phosphoserine is present on S620. T658 carries the phosphothreonine modification. The span at 667–678 (TAYSKSNGQPKS) shows a compositional bias: polar residues. A compositionally biased stretch (pro residues) spans 683–692 (PPGPGQPPLS). A Phosphoserine modification is found at S693. An Omega-N-methylarginine modification is found at R696.

The protein belongs to the DHHC palmitoyltransferase family. ERF2/ZDHHC9 subfamily. In terms of processing, phosphorylation regulates association with endocytic proteins and its subcellular localization. Phosphorylation by LYN during fatty acid uptake leads to inactivation of the activity. Autopalmitoylated. Palmitoylation of the C-terminal tail regulates stimulation-dependent plasma membrane motility.

It localises to the cell membrane. It catalyses the reaction L-cysteinyl-[protein] + hexadecanoyl-CoA = S-hexadecanoyl-L-cysteinyl-[protein] + CoA. Palmitoyltransferase that catalyzes the addition of palmitate onto various protein substrates such as CTNND2, CD36, GSDMD, NLRP3, NOD1, NOD2, STAT3 and S1PR1 thus plays a role in various biological processes including cell adhesion, inflammation, fatty acid uptake, bacterial sensing or cardiac functions. Plays an important role in the regulation of synapse efficacy by mediating palmitoylation of delta-catenin/CTNND2, thereby increasing synaptic delivery and surface stabilization of alpha-amino-3-hydroxy-5-methyl-4-isoxazole propionic acid receptors (AMPARs). Under basal conditions, remains at the synaptic membrane through FYN-mediated phosphorylation that prevents association with endocytic proteins. Neuronal activity enhances the internalization and trafficking of DHHC5 from spines to dendritic shafts where it palmitoylates delta-catenin/CTNND2. Regulates cell adhesion at the plasma membrane by palmitoylating GOLGA7B and DSG2. Plays a role in innate immune response by mediating the palmitoylation of NOD1 and NOD2 and their proper recruitment to the bacterial entry site and phagosomes. Also participates in fatty acid uptake by palmitoylating CD36 and thereby targeting it to the plasma membrane. Upon binding of fatty acids to CD36, gets phosphorylated by LYN leading to inactivation and subsequent CD36 caveolar endocytosis. Controls oligodendrocyte development by catalyzing STAT3 palmitoylation. Acts as a regulator of inflammatory response by mediating palmitoylation of NLRP3 and GSDMD. Palmitoylates NLRP3 to promote inflammasome assembly and activation. Activates pyroptosis by catalyzing palmitoylation of gasdermin-D (GSDMD), thereby promoting membrane translocation and pore formation of GSDMD. The protein is Palmitoyltransferase ZDHHC5 (ZDHHC5) of Bos taurus (Bovine).